Here is a 365-residue protein sequence, read N- to C-terminus: tRNA-specific 2-thiouridylase MnmA (365 aa).

Residues 12–19 (AMSGGVDS) and methionine 38 each bind ATP. Cysteine 108 functions as the Nucleophile in the catalytic mechanism. Cysteine 108 and cysteine 206 form a disulfide bridge. Glycine 132 contacts ATP. Residues 156–158 (KDQ) are interaction with tRNA. Cysteine 206 serves as the catalytic Cysteine persulfide intermediate. Residues 312-313 (RY) are interaction with tRNA.

Belongs to the MnmA/TRMU family.

The protein localises to the cytoplasm. It carries out the reaction S-sulfanyl-L-cysteinyl-[protein] + uridine(34) in tRNA + AH2 + ATP = 2-thiouridine(34) in tRNA + L-cysteinyl-[protein] + A + AMP + diphosphate + H(+). Functionally, catalyzes the 2-thiolation of uridine at the wobble position (U34) of tRNA, leading to the formation of s(2)U34. The chain is tRNA-specific 2-thiouridylase MnmA from Carboxydothermus hydrogenoformans (strain ATCC BAA-161 / DSM 6008 / Z-2901).